The primary structure comprises 177 residues: ATP-dependent protease subunit HslV (177 aa).

Thr2 is an active-site residue. Gly157, Cys160, and Thr163 together coordinate Na(+).

Belongs to the peptidase T1B family. HslV subfamily. A double ring-shaped homohexamer of HslV is capped on each side by a ring-shaped HslU homohexamer. The assembly of the HslU/HslV complex is dependent on binding of ATP.

Its subcellular location is the cytoplasm. It carries out the reaction ATP-dependent cleavage of peptide bonds with broad specificity.. With respect to regulation, allosterically activated by HslU binding. Its function is as follows. Protease subunit of a proteasome-like degradation complex believed to be a general protein degrading machinery. This is ATP-dependent protease subunit HslV from Aeromonas salmonicida (strain A449).